A 298-amino-acid chain; its full sequence is GTP cyclohydrolase FolE2 (298 aa).

The protein belongs to the GTP cyclohydrolase IV family.

The catalysed reaction is GTP + H2O = 7,8-dihydroneopterin 3'-triphosphate + formate + H(+). It functions in the pathway cofactor biosynthesis; 7,8-dihydroneopterin triphosphate biosynthesis; 7,8-dihydroneopterin triphosphate from GTP: step 1/1. Functionally, converts GTP to 7,8-dihydroneopterin triphosphate. This chain is GTP cyclohydrolase FolE2, found in Azotobacter vinelandii (strain DJ / ATCC BAA-1303).